Consider the following 145-residue polypeptide: MNKDEVFLRQWFEILYSLTNPEANSDLRRINNEKGVEKVGQKRSAESRREGKKKRVKTQCVIKSSDKSDHDTLLKKKRRERIRRQLETLKEITPNCPQSDINAILDCVIEYTNNLRLAHYKGSQGICDDWRLFTEAGAVLYYIDT.

The segment covering 33-49 (EKGVEKVGQKRSAESRR) has biased composition (basic and acidic residues). The interval 33-61 (EKGVEKVGQKRSAESRREGKKKRVKTQCV) is disordered. The bHLH domain occupies 66-115 (DKSDHDTLLKKKRRERIRRQLETLKEITPNCPQSDINAILDCVIEYTNNL).

In terms of assembly, homodimer.

The protein resides in the nucleus. Its function is as follows. Required during early embryo development, for the endosperm formation. The polypeptide is Transcription factor MEE8 (MEE8) (Arabidopsis thaliana (Mouse-ear cress)).